The sequence spans 718 residues: Amino-acid acetyltransferase, mitochondrial (718 aa).

A mitochondrion-targeting transit peptide spans 1-36; the sequence is MNPNAVWPRTAQSSLKKHQVSLCTCQRRSHYRLRSF. Positions 97–116 are disordered; that stretch reads QHQPDLPQKPTSAPASTAKI. The region spanning 539–708 is the N-acetyltransferase domain; the sequence is RQPRLRLDDP…YEAVCRSIQP (170 aa).

The protein belongs to the acetyltransferase family.

It localises to the mitochondrion. It catalyses the reaction L-glutamate + acetyl-CoA = N-acetyl-L-glutamate + CoA + H(+). It participates in amino-acid biosynthesis; L-arginine biosynthesis; N(2)-acetyl-L-ornithine from L-glutamate: step 1/4. Its function is as follows. N-acetylglutamate synthase involved in arginine biosynthesis. This chain is Amino-acid acetyltransferase, mitochondrial (arg2), found in Aspergillus clavatus (strain ATCC 1007 / CBS 513.65 / DSM 816 / NCTC 3887 / NRRL 1 / QM 1276 / 107).